Consider the following 199-residue polypeptide: N-(5'-phosphoribosyl)anthranilate isomerase (199 aa).

The protein belongs to the TrpF family.

It carries out the reaction N-(5-phospho-beta-D-ribosyl)anthranilate = 1-(2-carboxyphenylamino)-1-deoxy-D-ribulose 5-phosphate. It functions in the pathway amino-acid biosynthesis; L-tryptophan biosynthesis; L-tryptophan from chorismate: step 3/5. The sequence is that of N-(5'-phosphoribosyl)anthranilate isomerase from Lacticaseibacillus paracasei (strain ATCC 334 / BCRC 17002 / CCUG 31169 / CIP 107868 / KCTC 3260 / NRRL B-441) (Lactobacillus paracasei).